We begin with the raw amino-acid sequence, 66 residues long: Beta-mammal toxin Cv1 (66 aa).

Residues 1–66 (KEGYIVNLST…VWPLPKKTCN (66 aa)) enclose the LCN-type CS-alpha/beta domain. Disulfide bonds link C12–C65, C16–C41, C25–C46, and C29–C48.

As to expression, expressed by the venom gland.

It is found in the secreted. Its activity is regulated as follows. Is susceptible to be neutralized by human antibodies scFvs 10FG2 and HV. Beta toxins bind voltage-independently at site-4 of sodium channels (Nav) and reduces peak current and shifts the voltage of activation toward more negative potentials thereby affecting sodium channel activation and promoting spontaneous and repetitive firing. This toxin is slightly toxic to mice. This Centruroides villegasi (Scorpion) protein is Beta-mammal toxin Cv1.